A 172-amino-acid polypeptide reads, in one-letter code: WW domain binding protein VOPP1 (172 aa).

A signal peptide spans 1-22 (MRRQPAKVAALLLGLLLECTEA). At 23–60 (KKHCWYFEGLYPTYYICRSYEDCCGSRCCVRALSIQRL) the chain is on the extracellular side. Residues 61-81 (WYFWFLLMMGVLFCCGAGFFI) traverse the membrane as a helical segment. Residues 82-172 (RRRMYPPPLI…PPYEQVVKAK (91 aa)) lie on the Cytoplasmic side of the membrane. Positions 102–153 (RQPPNPGPGAQQPGPPYYTDPGGPGMNPVGNSMAMAFQVPPNSPQGSVACPP) are disordered. Residues 104–119 (PPNPGPGAQQPGPPYY) are compositionally biased toward pro residues.

Belongs to the VOPP1/ECOP family. As to quaternary structure, interacts with WWOX (via WW domain). As to expression, widely expressed with highest levels in thymus and ovary.

The protein localises to the cytoplasmic vesicle membrane. The protein resides in the late endosome membrane. It localises to the lysosome membrane. Increases the transcriptional activity of NFKB1 by facilitating its nuclear translocation, DNA-binding and associated apoptotic response, when overexpressed. May sequester WWOX in lysosomal vesicles and thereby regulate WWOX role as tumor suppressor. The sequence is that of WW domain binding protein VOPP1 from Homo sapiens (Human).